A 302-amino-acid chain; its full sequence is Transmembrane protein 191 (302 aa).

The stretch at Q5–S147 forms a coiled coil. Residues L39 to G66 are disordered. Basic and acidic residues predominate over residues R42–L53. Residues L242–L262 traverse the membrane as a helical segment.

It belongs to the TMEM191 family.

The protein resides in the membrane. The polypeptide is Transmembrane protein 191 (Mus musculus (Mouse)).